Consider the following 439-residue polypeptide: Na(+)/H(+) antiporter NhaA 1 (439 aa).

Transmembrane regions (helical) follow at residues 14–34, 60–80, 98–118, 127–147, 156–176, 179–199, 213–233, 303–323, 335–355, 375–395, and 408–428; these read ITGG…ANLA, ISLH…FIGL, ALPL…YYFF, GWGI…AMVG, IFLS…IAIF, EQIF…LAVA, IGLI…TIAG, HPIS…GVIV, IVLG…FLFA, IIGT…ISDL, and VAVL…LISA.

This sequence belongs to the NhaA Na(+)/H(+) (TC 2.A.33) antiporter family.

Its subcellular location is the cell inner membrane. It carries out the reaction Na(+)(in) + 2 H(+)(out) = Na(+)(out) + 2 H(+)(in). Na(+)/H(+) antiporter that extrudes sodium in exchange for external protons. The polypeptide is Na(+)/H(+) antiporter NhaA 1 (Psychromonas ingrahamii (strain DSM 17664 / CCUG 51855 / 37)).